Reading from the N-terminus, the 357-residue chain is Protein BIG GRAIN 1-like A (357 aa).

2 disordered regions span residues 1-146 (MEIT…KELG) and 208-233 (SSTCSSASSFSRSCLSKTPSSSGKSK). The segment covering 75 to 87 (DFERSRRKTDFLR) has biased composition (basic and acidic residues). Low complexity-rich tracts occupy residues 88–104 (HSNSSSSDSSGFSSSES) and 112–127 (KSSASPPSSSRQQPKP). The span at 129–139 (RTSSVDHSSAV) shows a compositional bias: polar residues. Residues 208–223 (SSTCSSASSFSRSCLS) show a composition bias toward low complexity.

It belongs to the BIG GRAIN 1 (BG1) plant protein family.

It localises to the cell membrane. Involved in auxin transport. Regulator of the auxin signaling pathway. The protein is Protein BIG GRAIN 1-like A of Arabidopsis thaliana (Mouse-ear cress).